A 109-amino-acid chain; its full sequence is Nucleoid-associated protein YbaB (109 aa).

This sequence belongs to the YbaB/EbfC family. As to quaternary structure, homodimer.

Its subcellular location is the cytoplasm. The protein localises to the nucleoid. In terms of biological role, binds to DNA and alters its conformation. May be involved in regulation of gene expression, nucleoid organization and DNA protection. This chain is Nucleoid-associated protein YbaB, found in Escherichia coli O8 (strain IAI1).